The sequence spans 470 residues: Putative multidrug resistance protein MdtD (470 aa).

Topologically, residues 1-11 (MTELPDNTRWQ) are periplasmic. The chain crosses the membrane as a helical span at residues 12–32 (LWIVAFGFFMQSLDTTIVNTA). The Cytoplasmic portion of the chain corresponds to 33 to 48 (LPSMAKSLGESPLHMH). Residues 49–69 (MVVVSYVLTVAVMLPASGWLA) form a helical membrane-spanning segment. Residues 70-76 (DKIGVRN) are Periplasmic-facing. Residues 77–97 (IFFAAIVLFTLGSLFCALSGT) form a helical membrane-spanning segment. Residues 98-101 (LNQL) are Cytoplasmic-facing. Residues 102–124 (VLARVLQGVGGAMMVPVGRLTVM) traverse the membrane as a helical segment. Topologically, residues 125–137 (KIVPRAQYMAAMT) are periplasmic. A helical transmembrane segment spans residues 138-158 (FVTLPGQIGPLLGPALGGVLV). The Cytoplasmic portion of the chain corresponds to 159–164 (EYASWH). The helical transmembrane segment at 165 to 185 (WIFLINIPVGIVGAMATFMLM) threads the bilayer. The Periplasmic portion of the chain corresponds to 186 to 196 (PNYTIETRRFD). A helical transmembrane segment spans residues 197 to 217 (LPGFLLLAIGMAVLTLALDGS). Topologically, residues 218 to 224 (KSMGISP) are cytoplasmic. The chain crosses the membrane as a helical span at residues 225–245 (WTLAGLAAGGAAAILLYLFHA). Residues 246–262 (KKNSGALFSLRLFRTPT) lie on the Periplasmic side of the membrane. A helical transmembrane segment spans residues 263 to 283 (FSLGLLGSFAGRIGSGMLPFM). Topologically, residues 284–285 (TP) are cytoplasmic. A helical membrane pass occupies residues 286 to 306 (VFLQIGLGFSPFHAGLMMIPM). Residues 307-341 (VLGSMGMKRIVVQIVNRFGYRRVLVATTLGLALVS) lie on the Periplasmic side of the membrane. Residues 342-362 (LLFMSVALLGWYYLLPLVLLL) traverse the membrane as a helical segment. Topologically, residues 363 to 395 (QGMVNSARFSSMNTLTLKDLPDTLASSGNSLLS) are cytoplasmic. A helical membrane pass occupies residues 396-416 (MIMQLSMSIGVTIAGMLLGMF). Residues 417 to 430 (GQQHIGIDSSATHH) lie on the Periplasmic side of the membrane. The helical transmembrane segment at 431 to 451 (VFMYTWLCMAVIIALPAIIFA) threads the bilayer. At 452 to 470 (RVPNDTQQNMVISRRKRSL) the chain is on the cytoplasmic side.

Belongs to the major facilitator superfamily. TCR/Tet family.

The protein resides in the cell inner membrane. This is Putative multidrug resistance protein MdtD from Salmonella agona (strain SL483).